A 187-amino-acid chain; its full sequence is Mitochondrial import receptor subunit TOM20-4 (187 aa).

The residue at position 1 (Met-1) is an N-acetylmethionine. Over 1-160 (MDMQNENERL…QKKTSEFKYD (160 aa)) the chain is Cytoplasmic. A TPR repeat occupies 84-117 (LSFGFLSSDQTEASDNFEKASQFFQLAVEEQPES). A helical membrane pass occupies residues 161–178 (VFGWVILASYVVAWISFA). The Mitochondrial intermembrane portion of the chain corresponds to 179-187 (NSQTPVSRQ). An AKR2A-binding sequence (ABS) required for mitochondrion outer membrane targeting motif is present at residues 179–187 (NSQTPVSRQ).

It belongs to the Tom20 family. As to quaternary structure, forms part of the preprotein translocase complex of the outer mitochondrial membrane (TOM complex) which consists of at least 6 different proteins (TOM5, TOM6, TOM7, TOM20, TOM22/TOM9 and TOM40). Interacts with a variety of mitochondrial precursor proteins. Interacts with AKR2A. Component of a mitochondrial large protein complex that contains, at least, MIC60, DGS1, TOM40, TOM20 proteins, and petC/RISP. In terms of processing, the N-terminus is blocked. Expressed in roots, flowers, young cotyledons and leaves.

The protein localises to the mitochondrion outer membrane. Central component of the receptor complex responsible for the recognition and translocation of cytosolically synthesized mitochondrial preproteins. Together with TOM22 functions as the transit peptide receptor at the surface of the mitochondrion outer membrane and facilitates the movement of preproteins into the translocation pore. The sequence is that of Mitochondrial import receptor subunit TOM20-4 from Arabidopsis thaliana (Mouse-ear cress).